The sequence spans 379 residues: Homoserine O-succinyltransferase (379 aa).

The AB hydrolase-1 domain maps to 51 to 360; sequence NAVLICHALS…DAPQGHDAFL (310 aa). The active-site Nucleophile is the S157. R227 provides a ligand contact to substrate. Residues D323 and H356 contribute to the active site. Substrate is bound at residue D357.

This sequence belongs to the AB hydrolase superfamily. MetX family. Homodimer.

It is found in the cytoplasm. The enzyme catalyses L-homoserine + succinyl-CoA = O-succinyl-L-homoserine + CoA. The protein operates within amino-acid biosynthesis; L-methionine biosynthesis via de novo pathway; O-succinyl-L-homoserine from L-homoserine: step 1/1. In terms of biological role, transfers a succinyl group from succinyl-CoA to L-homoserine, forming succinyl-L-homoserine. This is Homoserine O-succinyltransferase from Pseudomonas aeruginosa (strain LESB58).